Consider the following 96-residue polypeptide: Myticin-B (96 aa).

The signal sequence occupies residues 1–20 (MKATMLLAVVVAVFVAGTEA). The propeptide at 61-96 (VKFPFGATQDAKSMNELEYTPIMKSMENLDNGMDML) is removed in mature form.

Post-translationally, contains four disulfide bonds. In terms of tissue distribution, hemocytes.

The protein resides in the secreted. Its function is as follows. Bacteriolytic activity against Gram-positive bacteria M.luteus, B.megaterium and A.viridans and Gram-negative bacteria E.coli D31. Possesses antifungal activity against F.oxysporum. The polypeptide is Myticin-B (Mytilus galloprovincialis (Mediterranean mussel)).